The chain runs to 416 residues: Glutamyl-tRNA reductase (416 aa).

Substrate is bound by residues 49–52 (TCNR), Ser105, 110–112 (EPQ), and Gln116. Residue Cys50 is the Nucleophile of the active site. An NADP(+)-binding site is contributed by 185–190 (GAGETI).

This sequence belongs to the glutamyl-tRNA reductase family. Homodimer.

The catalysed reaction is (S)-4-amino-5-oxopentanoate + tRNA(Glu) + NADP(+) = L-glutamyl-tRNA(Glu) + NADPH + H(+). The protein operates within porphyrin-containing compound metabolism; protoporphyrin-IX biosynthesis; 5-aminolevulinate from L-glutamyl-tRNA(Glu): step 1/2. Its function is as follows. Catalyzes the NADPH-dependent reduction of glutamyl-tRNA(Glu) to glutamate 1-semialdehyde (GSA). The sequence is that of Glutamyl-tRNA reductase from Shewanella halifaxensis (strain HAW-EB4).